The chain runs to 622 residues: MSSKSRRAGTATPQPGNTSTPRPPSAGPQPPPPSTHSQTASSPLSPTRHSRVAEKVELQNLNDRLATYIDRVRNLETENSRLTIEVQTTRDTVTRETTNIKNIFEAELLETRRLLDDTARDRARAEIDIKRLWEENEELKNKLDKKTKECTTAEGNVRMYESRANELNNKYNQANADRKKLNEDLNEALKELERLRKQFEETRKNLEQETLSRVDLENTIQSLREELSFKDQIHSQEINESRRIKQTEYSEIDGRLSSEYDAKLKQSLQELRAQYEEQMQINRDEIQSLYEDKIQRLQEAAARTSNSTHKSIEELRSTRVRIDALNANINELEQANADLNARIRDLERQLDNDRERHGQEIDLLEKELIRLREEMTQQLKEYQDLMDIKVSLDLEIAAYDKLLVGEEARLNITPATNTATVQSFSQSLRNSTRATPSRRTPSAAVKRKRAVVDESEDHSVADYYVSASAKGNVEIKEIDPEGKFVRLFNKGSEEVAIGGWQLQRLINEKGPSTTYKFHRSVRIEPNGVITVWSADTKASHEPPSSLVMKSQKWVSADNTRTILLNSEGEAVANLDRIKRIVSQHTSSSRLSRRRSVTAVDGNEQLYHQQGDPQQSNEKCAIM.

The disordered stretch occupies residues 1-50 (MSSKSRRAGTATPQPGNTSTPRPPSAGPQPPPPSTHSQTASSPLSPTRHS). Residue serine 2 is modified to N-acetylserine. Positions 2–56 (SSKSRRAGTATPQPGNTSTPRPPSAGPQPPPPSTHSQTASSPLSPTRHSRVAEKV) are head. 3 positions are modified to phosphothreonine: threonine 10, threonine 12, and threonine 20. Residues 21-34 (PRPPSAGPQPPPPS) show a composition bias toward pro residues. 2 positions are modified to phosphoserine: serine 25 and serine 34. Threonine 39 bears the Phosphothreonine mark. Phosphoserine is present on residues serine 41, serine 42, and serine 45. The residue at position 47 (threonine 47) is a Phosphothreonine. Residues 54-410 (EKVELQNLND…KLLVGEEARL (357 aa)) form the IF rod domain. Residues 55 to 91 (KVELQNLNDRLATYIDRVRNLETENSRLTIEVQTTRD) form a coil 1A region. The interval 92-103 (TVTRETTNIKNI) is linker 1. The interval 104 to 241 (FEAELLETRR…QIHSQEINES (138 aa)) is coil 1B. The residue at position 235 (serine 235) is a Phosphoserine. Residues 242–265 (RRIKQTEYSEIDGRLSSEYDAKLK) form a linker 2 region. Tyrosine 249 is subject to Phosphotyrosine. 2 positions are modified to phosphoserine: serine 250 and serine 311. Residues 266 to 408 (QSLQELRAQY…YDKLLVGEEA (143 aa)) form a coil 2 region. Residues 409-619 (RLNITPATNT…GDPQQSNEKC (211 aa)) are tail. Phosphothreonine is present on residues threonine 413 and threonine 435. A compositionally biased stretch (polar residues) spans 429-440 (RNSTRATPSRRT). Residues 429–448 (RNSTRATPSRRTPSAAVKRK) are disordered. A Phosphoserine modification is found at serine 442. The short motif at 446-451 (KRKRAV) is the Nuclear localization signal element. Phosphoserine occurs at positions 455 and 459. The LTD domain maps to 461–588 (ADYYVSASAK…RIVSQHTSSS (128 aa)). A Phosphoserine modification is found at serine 595. A Phosphothreonine modification is found at threonine 597. The tract at residues 603 to 622 (EQLYHQQGDPQQSNEKCAIM) is disordered. Polar residues predominate over residues 605–622 (LYHQQGDPQQSNEKCAIM). Serine 615 carries the post-translational modification Phosphoserine. Cysteine 619 bears the Cysteine methyl ester mark. Cysteine 619 carries the S-farnesyl cysteine lipid modification. Residues 620 to 622 (AIM) constitute a propeptide, removed in mature form.

It belongs to the intermediate filament family. As to quaternary structure, interacts directly with LBR. Interacts with MAN1. Interacts with Ote. In terms of processing, three forms of lamin have been identified in D.melanogaster, lamin Dm0 is rapidly processed to lamin Dm1 in the cytoplasm, Dm1 is then assembled in the nuclear envelope and is then phosphorylated, forming lamin Dm2. As to expression, constitutively expressed in all tissues (at protein level). Expressed in spermatocytes (at protein level).

The protein localises to the nucleus. It localises to the nucleus inner membrane. Its subcellular location is the nucleus envelope. It is found in the nucleus lamina. The protein resides in the cytoplasm. The protein localises to the cytoskeleton. It localises to the spindle pole. In terms of biological role, lamins are components of the nuclear lamina, a fibrous layer on the nucleoplasmic side of the inner nuclear membrane, which is thought to provide a framework for the nuclear envelope and may also interact with chromatin. May have a role in the localization of the LEM domain proteins Ote, bocks and MAN1 to the nuclear membrane. In spermatocytes, plays a role in maintaining type-A lamin LamC nuclear localization; regulates meiotic cytokinesis by maintaining the structure of the spindle envelope, and by contributing to the formation of the contractile ring and central spindle. Required for nuclear migration and to link the microtubule organizing center (MTOC) to the nucleus. In addition, is required for nuclear envelope localization of klar. The protein is Lamin Dm0 of Drosophila melanogaster (Fruit fly).